We begin with the raw amino-acid sequence, 560 residues long: Protein AATF (560 aa).

Alanine 2 carries the N-acetylalanine modification. Residues serine 61 and serine 63 each carry the phosphoserine modification. The tract at residues 76 to 208 is disordered; that stretch reads TSRKAWNEDH…GDRNSEDDGV (133 aa). Acidic residues predominate over residues 94-129; the sequence is SDEEISDEEGSGDEDSEGLGLEEYDEDDLGAAEEQE. A phosphoserine mark is found at serine 150 and serine 155. Residues 156-165 are compositionally biased toward basic and acidic residues; that stretch reads DFEKFTKGMD. Over residues 168–195 the composition is skewed to acidic residues; that stretch reads GSSEEEEDEESGMEEGDDAEDSQGESEE. Residues serine 203, serine 273, serine 316, serine 320, and serine 321 each carry the phosphoserine modification. The interval 273–315 is POLR2J binding; it reads SALKNSHKALKALLRSLVGLQEELLFQYPDTRYLVDGTKPNAG. The interval 309-333 is disordered; the sequence is GTKPNAGSEEISSEDDELVEEKKQQ. Residues 316-372 are RB1 binding; that stretch reads SEEISSEDDELVEEKKQQRRRVPAKRKLEMEDYPSFMAKRFADFTVYRNRTLQKWHD. Residues 373 to 472 form an RB1 and SP1 binding region; that stretch reads KTKLASGKLG…FYHQLLRELI (100 aa).

This sequence belongs to the AATF family. In terms of assembly, part of the small subunit (SSU) processome, composed of more than 70 proteins and the RNA chaperone small nucleolar RNA (snoRNA) U3. Interacts with POLR2J, RB1/RB, RBL1/P107 and RBL2/P130. Interacts with PAWR and SP1. May also bind MAPT. Hyperphosphorylated during the G1/S phase transition. As to expression, ubiquitously expressed. Expressed at high levels in brain, heart, kidney, placenta and thymus.

It is found in the nucleus. The protein resides in the nucleolus. In terms of biological role, part of the small subunit (SSU) processome, first precursor of the small eukaryotic ribosomal subunit. During the assembly of the SSU processome in the nucleolus, many ribosome biogenesis factors, an RNA chaperone and ribosomal proteins associate with the nascent pre-rRNA and work in concert to generate RNA folding, modifications, rearrangements and cleavage as well as targeted degradation of pre-ribosomal RNA by the RNA exosome. May function as a general inhibitor of the histone deacetylase HDAC1. Binding to the pocket region of RB1 may displace HDAC1 from RB1/E2F complexes, leading to activation of E2F target genes and cell cycle progression. Conversely, displacement of HDAC1 from SP1 bound to the CDKN1A promoter leads to increased expression of this CDK inhibitor and blocks cell cycle progression. Also antagonizes PAWR mediated induction of aberrant amyloid peptide production in Alzheimer disease (presenile and senile dementia), although the molecular basis for this phenomenon has not been described to date. In Homo sapiens (Human), this protein is Protein AATF.